The primary structure comprises 458 residues: Elongation factor 1-alpha (458 aa).

At G2 the chain carries N,N,N-trimethylglycine. K3 bears the N6,N6-dimethyllysine; alternate mark. K3 is modified (N6-methyllysine; alternate). A tr-type G domain is found at 5-240 (KTHVNVVVIG…DAIDPPQRPS (236 aa)). Residues 14–21 (GHVDSGKS) form a G1 region. 14–21 (GHVDSGKS) provides a ligand contact to GTP. K30 carries the N6-methyllysine modification. Positions 70 to 74 (GITID) are G2. Residue K79 is modified to N6,N6,N6-trimethyllysine. The segment at 91 to 94 (DAPG) is G3. Residues 91 to 95 (DAPGH) and 153 to 156 (NKMD) contribute to the GTP site. Residues 153 to 156 (NKMD) are G4. Residues 192–194 (SGW) are G5. N6,N6-dimethyllysine; alternate is present on K316. An N6-methyllysine; alternate modification is found at K316. Position 390 is an N6-methyllysine (K390).

Belongs to the TRAFAC class translation factor GTPase superfamily. Classic translation factor GTPase family. EF-Tu/EF-1A subfamily.

It localises to the cytoplasm. This protein promotes the GTP-dependent binding of aminoacyl-tRNA to the A-site of ribosomes during protein biosynthesis. This Absidia glauca (Pin mould) protein is Elongation factor 1-alpha (TEF-1).